Consider the following 68-residue polypeptide: Conotoxin Mr3.3 (68 aa).

The signal sequence occupies residues 1-19 (MSRLGVLLTICLLLFPLTA). The propeptide occupies 20–51 (VPLDGDQPADRPAERLQDDISSEHHPHFDSGR). The tract at residues 22–46 (LDGDQPADRPAERLQDDISSEHHPH) is disordered. The segment covering 27 to 46 (PADRPAERLQDDISSEHHPH) has biased composition (basic and acidic residues). 3 disulfide bridges follow: cysteine 53-cysteine 67, cysteine 54-cysteine 63, and cysteine 59-cysteine 66. 4-hydroxyproline is present on proline 65.

It belongs to the conotoxin M superfamily. As to expression, expressed by the venom duct.

It localises to the secreted. The protein is Conotoxin Mr3.3 of Conus marmoreus (Marble cone).